A 262-amino-acid chain; its full sequence is Small ribosomal subunit protein uS2 (262 aa).

The segment at 224 to 246 (GNQGEDQDDAQEQQVAADKKADS) is disordered.

The protein belongs to the universal ribosomal protein uS2 family.

In Lacticaseibacillus casei (strain BL23) (Lactobacillus casei), this protein is Small ribosomal subunit protein uS2.